Consider the following 180-residue polypeptide: O-acetyl-ADP-ribose deacetylase (180 aa).

The 175-residue stretch at 1-175 (MKPQIEVVVG…LYQRLLIQRG (175 aa)) folds into the Macro domain. Substrate contacts are provided by residues 11–12 (DI), Asn-25, 33–35 (GVD), and 122–126 (STGVY). The active-site Proton acceptor is the Asp-35.

This sequence belongs to the MacroD-type family. YmdB subfamily. Homodimer. Interacts with RNase III.

It carries out the reaction 3''-O-acetyl-ADP-D-ribose + H2O = ADP-D-ribose + acetate + H(+). The enzyme catalyses 2''-O-acetyl-ADP-D-ribose + H2O = ADP-D-ribose + acetate + H(+). Deacetylates O-acetyl-ADP ribose to yield ADP-ribose and free acetate. Down-regulates ribonuclease 3 (RNase III) activity. Acts by interacting directly with the region of the ribonuclease that is required for dimerization/activation. The protein is O-acetyl-ADP-ribose deacetylase of Enterobacter sp. (strain 638).